Consider the following 588-residue polypeptide: MEAADASRSNGSSPEARDARSPSGPSGSLENGTKADGKDAKTTNGHGGEAAEGKSLGSALKPGEGRSALFAGNEWRRPIIQFVESGDDKNSNYFSMDSMEGKRSPYAGLQLGAAKKPPVTFAEKGELRKSIFSESRKPTVSIMEPGETRRNSYPRADTGLFSRSKSGSEEVLCDSCIGNKQKAVKSCLVCQASFCELHLKPHLEGAAFRDHQLLEPIRDFEARKCPVHGKTMELFCQTDQTCICYLCMFQEHKNHSTVTVEEAKAEKETELSLQKEQLQLKIIEIEDEAEKWQKEKDRIKSFTTNEKAILEQNFRDLVRDLEKQKEEVRAALEQREQDAVDQVKVIMDALDERAKVLHEDKQTREQLHSISDSVLFLQEFGALMSNYSLPPPLPTYHVLLEGEGLGQSLGNFKDDLLNVCMRHVEKMCKADLSRNFIERNHMENGGDHRYVNNYTNSFGGEWSAPDTMKRYSMYLTPKGGVRTSYQPSSPGRFTKETTQKNFNNLYGTKGNYTSRVWEYSSSIQNSDNDLPVVQGSSSFSLKGYPSLMRSQSPKAQPQTWKSGKQTMLSHYRPFYVNKGNGIGSNEAP.

Positions 1–66 are disordered; that stretch reads MEAADASRSN…GSALKPGEGR (66 aa). A phosphoserine mark is found at Ser21, Ser28, Ser58, and Ser104. Tyr106 bears the Phosphotyrosine mark. A B box-type zinc finger spans residues 220 to 260; that stretch reads FEARKCPVHGKTMELFCQTDQTCICYLCMFQEHKNHSTVTV. Positions 225, 228, 247, and 252 each coordinate Zn(2+). The stretch at 259-352 forms a coiled coil; that stretch reads TVEEAKAEKE…VKVIMDALDE (94 aa). Thr476 carries the phosphothreonine modification. Ser489 is modified (phosphoserine).

As to quaternary structure, interacts with VIM and HINT1. Interacts with IKBKG/NEMO. Interacts with STING1. Post-translationally, constitutively phosphorylated by PKC on serine/threonine in A431 cells. In terms of tissue distribution, expressed in placenta, prostate and thymus.

The protein resides in the cytoplasm. Its subcellular location is the lysosome. In terms of biological role, plays a crucial role in the regulation of macrophage activation in response to viral or bacterial infections within the respiratory tract. Mechanistically, TRIM29 interacts with IKBKG/NEMO in the lysosome where it induces its 'Lys-48' ubiquitination and subsequent degradation. In turn, the expression of type I interferons and the production of pro-inflammatory cytokines are inhibited. Additionally, induces the 'Lys-48' ubiquitination of STING1 in a similar way, leading to its degradation. The sequence is that of Tripartite motif-containing protein 29 (TRIM29) from Homo sapiens (Human).